The chain runs to 107 residues: Neuroparsin-A (107 aa).

The first 22 residues, 1–22, serve as a signal peptide directing secretion; it reads MKATAALVAATLLLAVTLFHRA. A propeptide spanning residues 23–24 is cleaved from the precursor; the sequence is ER.

As to quaternary structure, homodimer; disulfide-linked.

Functionally, neurosparins are multifunctional neurohormones: they inhibit the effects of juvenile hormone, stimulate fluid reabsorption of isolated recta and induces an increase in hemolymph lipid and trehalose levels. This chain is Neuroparsin-A, found in Locusta migratoria (Migratory locust).